The sequence spans 229 residues: MTPKRERAVVCLSGGMDSCVCAAIAARDYEPYAIHFSYGQRTEARELVSARSVAERLGFKDLLHLKIDLFRRIGGSALTDTSIDVPKAPAEEAAIGAEIPVTYVPFRNAHFLAAAVSWAEVLGASKIVIGAVEQDSSGYPDCRPAYYEAFQHLIETGTKEGSIRVETPLIQLRKREIVRLGLELGAPLDLTWSCYSGAEEACGECESCVLRLRAFEEADAVDPIPYAHR.

L12–A22 is a binding site for ATP. Residues C194, C202, C205, and C208 each coordinate Zn(2+).

This sequence belongs to the QueC family. It depends on Zn(2+) as a cofactor.

It catalyses the reaction 7-carboxy-7-deazaguanine + NH4(+) + ATP = 7-cyano-7-deazaguanine + ADP + phosphate + H2O + H(+). It participates in purine metabolism; 7-cyano-7-deazaguanine biosynthesis. Catalyzes the ATP-dependent conversion of 7-carboxy-7-deazaguanine (CDG) to 7-cyano-7-deazaguanine (preQ(0)). In Acidobacterium capsulatum (strain ATCC 51196 / DSM 11244 / BCRC 80197 / JCM 7670 / NBRC 15755 / NCIMB 13165 / 161), this protein is 7-cyano-7-deazaguanine synthase.